The chain runs to 406 residues: Beta-galactoside alpha-2,6-sialyltransferase 1 (406 aa).

Over 1–9 (MIHTNLKKK) the chain is Cytoplasmic. A helical; Signal-anchor for type II membrane protein membrane pass occupies residues 10–26 (FSCCVLVFLLFAVICVW). At 27 to 406 (KEKKKGSYYD…TLPGFRTIHC (380 aa)) the chain is on the lumenal side. Cystine bridges form between Cys-142/Cys-406, Cys-184/Cys-335, and Cys-353/Cys-364. Residues Asn-149 and Asn-161 are each glycosylated (N-linked (GlcNAc...) asparagine). Substrate is bound by residues Ser-189, Asn-212, Asn-233, 322–324 (SSG), Cys-353, Tyr-354, Thr-365, Tyr-369, His-370, and Lys-376. Tyr-369 carries the post-translational modification Phosphotyrosine.

Belongs to the glycosyltransferase 29 family. Monomer and homodimer. N-glycosylated.

It localises to the golgi apparatus. Its subcellular location is the golgi stack membrane. The protein resides in the secreted. It catalyses the reaction a beta-D-galactoside + CMP-N-acetyl-beta-neuraminate = an N-acetyl-alpha-neuraminyl-(2-&gt;6)-beta-D-galactosyl derivative + CMP + H(+). It participates in protein modification; protein glycosylation. With respect to regulation, inhibited by CTP. Transfers sialic acid from CMP-sialic acid to galactose-containing acceptor substrates. In B lymphocytes, generates neuraminidase-sensitive lymphocyte cell-surface differentiation antigens, such as CDw75, HB-6 and CD76. The chain is Beta-galactoside alpha-2,6-sialyltransferase 1 (ST6GAL1) from Homo sapiens (Human).